We begin with the raw amino-acid sequence, 434 residues long: Serine--tRNA ligase (434 aa).

239-241 (TAE) is a binding site for L-serine. 270–272 (RSE) is an ATP binding site. Residue Glu-293 coordinates L-serine. Position 357–360 (357–360 (EISS)) interacts with ATP. Ser-392 provides a ligand contact to L-serine.

This sequence belongs to the class-II aminoacyl-tRNA synthetase family. Type-1 seryl-tRNA synthetase subfamily. As to quaternary structure, homodimer. The tRNA molecule binds across the dimer.

The protein localises to the cytoplasm. The enzyme catalyses tRNA(Ser) + L-serine + ATP = L-seryl-tRNA(Ser) + AMP + diphosphate + H(+). The catalysed reaction is tRNA(Sec) + L-serine + ATP = L-seryl-tRNA(Sec) + AMP + diphosphate + H(+). The protein operates within aminoacyl-tRNA biosynthesis; selenocysteinyl-tRNA(Sec) biosynthesis; L-seryl-tRNA(Sec) from L-serine and tRNA(Sec): step 1/1. Its function is as follows. Catalyzes the attachment of serine to tRNA(Ser). Is also able to aminoacylate tRNA(Sec) with serine, to form the misacylated tRNA L-seryl-tRNA(Sec), which will be further converted into selenocysteinyl-tRNA(Sec). The sequence is that of Serine--tRNA ligase from Cupriavidus taiwanensis (strain DSM 17343 / BCRC 17206 / CCUG 44338 / CIP 107171 / LMG 19424 / R1) (Ralstonia taiwanensis (strain LMG 19424)).